The following is a 430-amino-acid chain: Dihydrofolate synthase/folylpolyglutamate synthase (430 aa).

51-54 (GKGS) is an ATP binding site. Serine 75 contacts Mg(2+). Position 114–117 (114–117 (TEYG)) interacts with 7,8-dihydropteroate. Glutamate 145 is a Mg(2+) binding site. 152 to 154 (FDS) contacts 7,8-dihydropteroate. Histidine 172 lines the Mg(2+) pocket. ATP-binding residues include glutamine 263, arginine 302, and aspartate 315.

The protein belongs to the folylpolyglutamate synthase family. As to quaternary structure, monomer. It depends on Mg(2+) as a cofactor.

It carries out the reaction 7,8-dihydropteroate + L-glutamate + ATP = 7,8-dihydrofolate + ADP + phosphate + H(+). The catalysed reaction is (6S)-5,6,7,8-tetrahydrofolyl-(gamma-L-Glu)(n) + L-glutamate + ATP = (6S)-5,6,7,8-tetrahydrofolyl-(gamma-L-Glu)(n+1) + ADP + phosphate + H(+). The protein operates within cofactor biosynthesis; tetrahydrofolate biosynthesis; 7,8-dihydrofolate from 2-amino-4-hydroxy-6-hydroxymethyl-7,8-dihydropteridine diphosphate and 4-aminobenzoate: step 2/2. It functions in the pathway cofactor biosynthesis; tetrahydrofolylpolyglutamate biosynthesis. Its function is as follows. Functions in two distinct reactions of the de novo folate biosynthetic pathway. Catalyzes the addition of a glutamate residue to dihydropteroate (7,8-dihydropteroate or H2Pte) to form dihydrofolate (7,8-dihydrofolate monoglutamate or H2Pte-Glu). Also catalyzes successive additions of L-glutamate to tetrahydrofolate, leading to folylpolyglutamate derivatives. This Bacillus subtilis (strain 168) protein is Dihydrofolate synthase/folylpolyglutamate synthase (folC).